The following is a 561-amino-acid chain: Urocanate hydratase (561 aa).

Residues 52–53 (GG), Gln130, 176–178 (GMG), Glu196, Arg201, 242–243 (NA), 263–267 (QTSAH), 273–274 (YL), and Tyr322 contribute to the NAD(+) site. Cys410 is a catalytic residue. Gly492 contributes to the NAD(+) binding site.

Belongs to the urocanase family. The cofactor is NAD(+).

It is found in the cytoplasm. The enzyme catalyses 4-imidazolone-5-propanoate = trans-urocanate + H2O. It participates in amino-acid degradation; L-histidine degradation into L-glutamate; N-formimidoyl-L-glutamate from L-histidine: step 2/3. Its function is as follows. Catalyzes the conversion of urocanate to 4-imidazolone-5-propionate. In Salmonella gallinarum (strain 287/91 / NCTC 13346), this protein is Urocanate hydratase.